Reading from the N-terminus, the 77-residue chain is Large ribosomal subunit protein eL14 (77 aa).

The protein belongs to the eukaryotic ribosomal protein eL14 family.

The sequence is that of Large ribosomal subunit protein eL14 from Methanococcus maripaludis (strain C7 / ATCC BAA-1331).